The sequence spans 443 residues: ATP-dependent protease ATPase subunit HslU (443 aa).

Residues Ile20, 62–67, Asp255, Glu321, and Arg393 each bind ATP; that span reads GVGKTE.

This sequence belongs to the ClpX chaperone family. HslU subfamily. As to quaternary structure, a double ring-shaped homohexamer of HslV is capped on each side by a ring-shaped HslU homohexamer. The assembly of the HslU/HslV complex is dependent on binding of ATP.

Its subcellular location is the cytoplasm. ATPase subunit of a proteasome-like degradation complex; this subunit has chaperone activity. The binding of ATP and its subsequent hydrolysis by HslU are essential for unfolding of protein substrates subsequently hydrolyzed by HslV. HslU recognizes the N-terminal part of its protein substrates and unfolds these before they are guided to HslV for hydrolysis. The polypeptide is ATP-dependent protease ATPase subunit HslU (Helicobacter pylori (strain ATCC 700392 / 26695) (Campylobacter pylori)).